A 721-amino-acid chain; its full sequence is Polyribonucleotide nucleotidyltransferase (721 aa).

Residues Asp-511 and Asp-517 each coordinate Mg(2+). The KH domain occupies 577–637 (PSTDFFHINP…SGVQAAREHI (61 aa)). The S1 motif domain maps to 654–721 (GDIHKGIVKK…KGNKISLGIA (68 aa)).

This sequence belongs to the polyribonucleotide nucleotidyltransferase family. Requires Mg(2+) as cofactor.

The protein localises to the cytoplasm. It catalyses the reaction RNA(n+1) + phosphate = RNA(n) + a ribonucleoside 5'-diphosphate. In terms of biological role, involved in mRNA degradation. Catalyzes the phosphorolysis of single-stranded polyribonucleotides processively in the 3'- to 5'-direction. The chain is Polyribonucleotide nucleotidyltransferase from Sulfurimonas denitrificans (strain ATCC 33889 / DSM 1251) (Thiomicrospira denitrificans (strain ATCC 33889 / DSM 1251)).